Here is a 98-residue protein sequence, read N- to C-terminus: Large ribosomal subunit protein uL23 (98 aa).

This sequence belongs to the universal ribosomal protein uL23 family. In terms of assembly, part of the 50S ribosomal subunit. Contacts protein L29, and trigger factor when it is bound to the ribosome.

Its function is as follows. One of the early assembly proteins it binds 23S rRNA. One of the proteins that surrounds the polypeptide exit tunnel on the outside of the ribosome. Forms the main docking site for trigger factor binding to the ribosome. The sequence is that of Large ribosomal subunit protein uL23 from Streptococcus sanguinis (strain SK36).